The chain runs to 258 residues: Indole-3-glycerol phosphate synthase (258 aa).

This sequence belongs to the TrpC family.

It catalyses the reaction 1-(2-carboxyphenylamino)-1-deoxy-D-ribulose 5-phosphate + H(+) = (1S,2R)-1-C-(indol-3-yl)glycerol 3-phosphate + CO2 + H2O. Its pathway is amino-acid biosynthesis; L-tryptophan biosynthesis; L-tryptophan from chorismate: step 4/5. This chain is Indole-3-glycerol phosphate synthase, found in Nautilia profundicola (strain ATCC BAA-1463 / DSM 18972 / AmH).